A 265-amino-acid polypeptide reads, in one-letter code: MKLFVFLALAVAAATAVPAPAQKLTPTPIKDIQGRITNGYPAYEGKVPYIVGLLFSGNGNWWCGGSIIGNTWVLTAAHCTNGASGVTINYGASIRTQPQYTHWVGSGDIIQHHHYNSGNLHNDISLIRTPHVDFWSLVNKVELPSYNDRYQDYAGWWAVASGWGGTYDGSPLPDWLQSVDVQIISQSDCSRTWSLHDNMICINTDGGKSTCGGDSGGPLVTHDGNRLVGVTSFGSAAGCQSGAPAVFSRVTGYLDWIRDNTGISY.

Positions 1–21 (MKLFVFLALAVAAATAVPAPA) are cleaved as a signal peptide. Residues 22–35 (QKLTPTPIKDIQGR) constitute a propeptide that is removed on maturation. Positions 36 to 262 (ITNGYPAYEG…YLDWIRDNTG (227 aa)) constitute a Peptidase S1 domain. Cysteine 63 and cysteine 79 form a disulfide bridge. Catalysis depends on charge relay system residues histidine 78 and aspartate 123. 2 cysteine pairs are disulfide-bonded: cysteine 189–cysteine 201 and cysteine 211–cysteine 239. Serine 215 functions as the Charge relay system in the catalytic mechanism.

Belongs to the peptidase S1 family. As to expression, abundantly expressed in the larval gut.

Major function may be to aid in digestion. The polypeptide is Serine protease 1 (Drosophila melanogaster (Fruit fly)).